Reading from the N-terminus, the 661-residue chain is Ubiquitin carboxyl-terminal hydrolase 25 (661 aa).

Positions 24–335 constitute a USP domain; that stretch reads LGLRNLGNTC…KAYILFFSRS (312 aa). The Nucleophile role is filled by Cys-33. The active-site Proton acceptor is the His-294. 2 disordered regions span residues 387-406 and 449-558; these read GNLASSKPHKFIRPKPRAEQ and FHQD…LCSS. The span at 449–461 shows a compositional bias: basic and acidic residues; it reads FHQDENIAPKANK. 2 stretches are compositionally biased toward polar residues: residues 462-475 and 545-558; these read ENSVSVLPTKVNSG and NGVSTTQSKGLCSS.

It belongs to the peptidase C19 family.

It carries out the reaction Thiol-dependent hydrolysis of ester, thioester, amide, peptide and isopeptide bonds formed by the C-terminal Gly of ubiquitin (a 76-residue protein attached to proteins as an intracellular targeting signal).. Its function is as follows. Recognizes and hydrolyzes the peptide bond at the C-terminal Gly of ubiquitin. Involved in the processing of poly-ubiquitin precursors as well as that of ubiquitinated proteins. In Arabidopsis thaliana (Mouse-ear cress), this protein is Ubiquitin carboxyl-terminal hydrolase 25 (UBP25).